The primary structure comprises 505 residues: tRNA (guanine(6)-N(2))-methyltransferase THUMP3 (505 aa).

The disordered stretch occupies residues 145–182; it reads KAKRRKANQSAGKEKADCGQGDKADEKDGKKKHASSTS. Basic and acidic residues predominate over residues 156-173; that stretch reads GKEKADCGQGDKADEKDG. A THUMP domain is found at 171 to 287; it reads KDGKKKHASS…DNEVIVAIAL (117 aa).

It belongs to the methyltransferase superfamily. As to quaternary structure, part of the heterodimeric THUMPD3-TRM112 methyltransferase complex; this complex forms an active tRNA methyltransferase, where TRMT112 acts as an activator of the catalytic subunit THUMPD3. In terms of tissue distribution, ubiquitously expressed. Abundantly expressed in the testis, also expressed in the brain, heart, kidney, liver, lung, muscle and spleen.

It localises to the cytoplasm. It carries out the reaction guanosine(6) in tRNA + S-adenosyl-L-methionine = N(2)-methylguanosine(6) in tRNA + S-adenosyl-L-homocysteine + H(+). The enzyme catalyses guanosine(7) in tRNA + S-adenosyl-L-methionine = N(2)-methylguanosine(7) in tRNA + S-adenosyl-L-homocysteine + H(+). Functionally, catalytic subunit of the THUMPD3-TRM112 methyltransferase complex, that specifically mediates the S-adenosyl-L-methionine-dependent N(2)-methylation of guanosine nucleotide at position 6 (m2G6) in tRNAs. This is one of the major tRNA (guanine-N(2))-methyltransferases. Also catalyzes the S-adenosyl-L-methionine-dependent N(2)-methylation of guanosine nucleotide at position 7 of tRNA(Trp). The polypeptide is tRNA (guanine(6)-N(2))-methyltransferase THUMP3 (Mus musculus (Mouse)).